The sequence spans 53 residues: Lectin alpha chain (53 aa).

It belongs to the leguminous lectin family. As to quaternary structure, tetramer of two alpha and two beta chains.

This chain is Lectin alpha chain, found in Lathyrus clymenum (Spanish vetchling).